The sequence spans 316 residues: tRNA methyltransferase 10 homolog B (316 aa).

Positions 73 to 98 (EKIVAAKKSKRKQEKERRKANRVENS) form a coiled coil. Residues 77-96 (AAKKSKRKQEKERRKANRVE) are disordered. One can recognise an SAM-dependent MTase TRM10-type domain in the interval 113 to 310 (IKERLLEAKH…KGVSSRKGYV (198 aa)).

This sequence belongs to the class IV-like SAM-binding methyltransferase superfamily. TRM10 family.

The enzyme catalyses guanosine(9) in tRNA + S-adenosyl-L-methionine = N(1)-methylguanosine(9) in tRNA + S-adenosyl-L-homocysteine + H(+). S-adenosyl-L-methionine-dependent guanine N(1)-methyltransferase that catalyzes the formation of N(1)-methylguanine at position 9 (m1G9) in tRNAs. Probably not able to catalyze formation of N(1)-methyladenine at position 9 (m1A9) in tRNAs. The protein is tRNA methyltransferase 10 homolog B (TRMT10B) of Bos taurus (Bovine).